Consider the following 508-residue polypeptide: UDP-N-acetylmuramoylalanine--D-glutamate ligase (508 aa).

138-144 (GTNGKTT) lines the ATP pocket. The tract at residues 294–314 (FDEPAPRRKKDAPPPTRAGGR) is disordered.

The protein belongs to the MurCDEF family.

The protein localises to the cytoplasm. The enzyme catalyses UDP-N-acetyl-alpha-D-muramoyl-L-alanine + D-glutamate + ATP = UDP-N-acetyl-alpha-D-muramoyl-L-alanyl-D-glutamate + ADP + phosphate + H(+). It functions in the pathway cell wall biogenesis; peptidoglycan biosynthesis. In terms of biological role, cell wall formation. Catalyzes the addition of glutamate to the nucleotide precursor UDP-N-acetylmuramoyl-L-alanine (UMA). The protein is UDP-N-acetylmuramoylalanine--D-glutamate ligase of Bordetella parapertussis (strain 12822 / ATCC BAA-587 / NCTC 13253).